The primary structure comprises 527 residues: Ankyrin repeat domain-containing protein 42 (527 aa).

Positions 1–27 are disordered; the sequence is MPGVANPGPSKSRRETADSSSRKKVHF. Basic and acidic residues predominate over residues 12–21; that stretch reads SRRETADSSS. ANK repeat units lie at residues 25-54, 59-88, 92-121, 125-154, 158-187, 191-220, 228-257, 263-293, 297-326, and 330-360; these read VHFS…NLNE, HQFT…DATQ, RGWT…NLAT, RGCT…DPSV, REWK…GIED, NGNL…SATQ, NGEN…EGSH, DLAF…NLNE, NGST…ESNI, and AGET…EIDD. The stretch at 395-484 forms a coiled coil; that stretch reads NARMRAHKKI…ETLQKIQVTS (90 aa).

The polypeptide is Ankyrin repeat domain-containing protein 42 (Ankrd42) (Mus musculus (Mouse)).